Here is a 793-residue protein sequence, read N- to C-terminus: ABC transporter G family member 1 (793 aa).

Residues 1 to 20 (MDSNNNNNNENEAFSGASES) are compositionally biased toward low complexity. Residues 1–96 (MDSNNNNNNE…NNNQNNNIIN (96 aa)) form a disordered region. The span at 21-37 (SEFRKIVEENENEREFE) shows a compositional bias: basic and acidic residues. The span at 59–68 (ETINPNISLD) shows a compositional bias: polar residues. Residues 67–102 (LDNNNNNNQNNQNNQNNNNNNNNQNNNIINNLNKKN) are a coiled coil. Residues 69 to 96 (NNNNNNQNNQNNQNNNNNNNNQNNNIIN) are compositionally biased toward low complexity. Residues 123–364 (VQITEKGKKK…FNANGYHCSE (242 aa)) enclose the ABC transporter domain. Residue 156-163 (GPSGAGKT) coordinates ATP. Residues 382–398 (DQADSDDDDYNDEEEEI) are compositionally biased toward acidic residues. Residues 382-457 (DQADSDDDDY…QSTDGRARRR (76 aa)) are disordered. Over residues 399–413 (GGGGGGSGGGAGGIE) the composition is skewed to gly residues. Over residues 421-437 (PTMNGSAVDNIKNNELK) the composition is skewed to polar residues. Residues 438–448 (QQQQQQQQQQQ) show a composition bias toward low complexity. An ABC transmembrane type-2 domain is found at 527 to 785 (MAFKVNLIQA…VLTFLVLKLK (259 aa)). Helical transmembrane passes span 533 to 553 (LIQA…LGLG), 563 to 583 (VVAF…IHVF), 610 to 630 (FMDA…VYWM), 647 to 667 (FVLM…LISS), 674 to 694 (VGTA…GFFI), 701 to 721 (GWLV…AAVI), and 764 to 784 (VWIL…VLKL).

It belongs to the ABC transporter superfamily. ABCG family.

The protein localises to the membrane. The protein is ABC transporter G family member 1 (abcG1) of Dictyostelium discoideum (Social amoeba).